The primary structure comprises 302 residues: Stanniocalcin-2 (302 aa).

A signal peptide spans 1-24; the sequence is MCAERLGHFMTLALVLATIDPARG. The interval 23 to 44 is disordered; it reads RGTDATNPPEGPQDRSSQQKGR. N-linked (GlcNAc...) asparagine glycosylation occurs at Asn-73. The disordered stretch occupies residues 218 to 302; sequence PPTAPPERQP…EQSEYSDIRR (85 aa). Residues 227–264 show a composition bias toward basic and acidic residues; that stretch reads PQVDRAKLSRAHHGEAGHHLPEPSSRETGRGAKGERGS. Phosphoserine occurs at positions 250 and 251. At Thr-254 the chain carries Phosphothreonine.

It belongs to the stanniocalcin family. In terms of assembly, homodimer; disulfide-linked.

It localises to the secreted. Has an anti-hypocalcemic action on calcium and phosphate homeostasis. The polypeptide is Stanniocalcin-2 (STC2) (Macaca nemestrina (Pig-tailed macaque)).